The chain runs to 227 residues: Ribosomal RNA large subunit methyltransferase E (227 aa).

S-adenosyl-L-methionine is bound by residues G78, W80, D103, D119, and D143. K183 serves as the catalytic Proton acceptor.

It belongs to the class I-like SAM-binding methyltransferase superfamily. RNA methyltransferase RlmE family.

Its subcellular location is the cytoplasm. It carries out the reaction uridine(2552) in 23S rRNA + S-adenosyl-L-methionine = 2'-O-methyluridine(2552) in 23S rRNA + S-adenosyl-L-homocysteine + H(+). Functionally, specifically methylates the uridine in position 2552 of 23S rRNA at the 2'-O position of the ribose in the fully assembled 50S ribosomal subunit. The protein is Ribosomal RNA large subunit methyltransferase E of Rickettsia typhi (strain ATCC VR-144 / Wilmington).